The following is a 607-amino-acid chain: DNA mismatch repair protein MutL (607 aa).

It belongs to the DNA mismatch repair MutL/HexB family.

Its function is as follows. This protein is involved in the repair of mismatches in DNA. It is required for dam-dependent methyl-directed DNA mismatch repair. May act as a 'molecular matchmaker', a protein that promotes the formation of a stable complex between two or more DNA-binding proteins in an ATP-dependent manner without itself being part of a final effector complex. The chain is DNA mismatch repair protein MutL from Anaeromyxobacter dehalogenans (strain 2CP-1 / ATCC BAA-258).